The sequence spans 633 residues: DNA mismatch repair protein MutL (633 aa).

This sequence belongs to the DNA mismatch repair MutL/HexB family.

Its function is as follows. This protein is involved in the repair of mismatches in DNA. It is required for dam-dependent methyl-directed DNA mismatch repair. May act as a 'molecular matchmaker', a protein that promotes the formation of a stable complex between two or more DNA-binding proteins in an ATP-dependent manner without itself being part of a final effector complex. This chain is DNA mismatch repair protein MutL, found in Pseudomonas fluorescens (strain SBW25).